Reading from the N-terminus, the 107-residue chain is Antimicrobial peptide microplusin (107 aa).

The signal sequence occupies residues 1 to 19 (MKSLLVCLVLAVVVLVASG). 3 disulfide bridges follow: C25-C60, C38-C88, and C49-C54. Residues 86–107 (TDCDHSHGHEHSHGHEHGHGHH) form a disordered region. Residues 87–107 (DCDHSHGHEHSHGHEHGHGHH) are compositionally biased toward basic and acidic residues.

Its subcellular location is the secreted. Its function is as follows. Has bacteriostatic activity against Gram-positive bacteria, but not against Gram-negative bacteria. Has fungistatic activity against some but not all fungi. Binds and sequesters copper and iron ions. Copper-chelating is crucial for antimicrobial activity against M.luteus. This Ixodes scapularis (Black-legged tick) protein is Antimicrobial peptide microplusin.